A 494-amino-acid polypeptide reads, in one-letter code: Ribitol 5-phosphate transferase FKRP (494 aa).

Residues 1–6 (MRLTRC) are Cytoplasmic-facing. Residues 7–29 (WAALAAAIILNLLVFFYVSWLQH) traverse the membrane as a helical segment. Topologically, residues 30–494 (QPRNSRARGP…NPALLSLTGG (465 aa)) are lumenal. Cysteines 168 and 191 form a disulfide. Residues asparagine 172 and asparagine 209 are each glycosylated (N-linked (GlcNAc...) asparagine). Positions 289, 296, 317, and 318 each coordinate Zn(2+). The segment at 289–318 (CSKESARCFGTVAGDTPAYLYEGRWTPPCC) is zinc finger loop. Glycine 345 and arginine 352 together coordinate CDP-L-ribitol. 3 CDP-L-ribitol regions span residues 359 to 364 (WDYDVD), 437 to 438 (QD), and 480 to 482 (NPE). Aspartate 360, aspartate 362, and aspartate 364 together coordinate Mg(2+).

This sequence belongs to the LicD transferase family. As to quaternary structure, homodimer; disulfide-linked. Forms a complex composed of FKRP, FKTN/fukutin, and RXYLT1/TMEM5. Also exists as large multimeric protein complexes. May interact with the dystrophin-glycoprotein complex (DGC). Post-translationally, N-glycosylated. In terms of tissue distribution, expressed in the retina, specifically in the inner segments of the photoreceptors, the outer plexiform layers, inner nuclear layers, and ganglion cell layers (at protein level). Expressed at highest levels in brain, lung, heart, kidney and liver.

It localises to the golgi apparatus membrane. Its subcellular location is the secreted. It is found in the cell membrane. The protein resides in the sarcolemma. The protein localises to the rough endoplasmic reticulum. It localises to the cytoplasm. It carries out the reaction 3-O-[Rib-ol-P-3-beta-D-GalNAc-(1-&gt;3)-beta-D-GlcNAc-(1-&gt;4)-(O-6-P-alpha-D-Man)]-Thr-[protein] + CDP-L-ribitol = 3-O-[Rib-ol-P-Rib-ol-P-3-beta-D-GalNAc-(1-&gt;3)-beta-D-GlcNAc-(1-&gt;4)-(O-6-P-alpha-D-Man)]-Thr-[protein] + CMP + H(+). It participates in protein modification; protein glycosylation. Catalyzes the transfer of CDP-ribitol to ribitol 5-phosphate previously attached by FKTN/fukutin of to the phosphorylated O-mannosyl trisaccharide (N-acetylgalactosamine-beta-3-N-acetylglucosamine-beta-4-(phosphate-6-)mannose), a carbohydrate structure present in alpha-dystroglycan (DAG1). This constitutes the second step in the formation of the ribose 5-phosphate tandem repeat which links the phosphorylated O-mannosyl trisaccharide to the ligand binding moiety composed of repeats of 3-xylosyl-alpha-1,3-glucuronic acid-beta-1. This Mus musculus (Mouse) protein is Ribitol 5-phosphate transferase FKRP.